A 426-amino-acid polypeptide reads, in one-letter code: Melibiose/raffinose/stachyose-binding protein MelE (426 aa).

A signal peptide spans 1 to 18 (MKHTFVLFLSLILLVLPG). Cysteine 19 is lipidated: N-palmitoyl cysteine. A lipid anchor (S-diacylglycerol cysteine) is attached at cysteine 19.

It belongs to the bacterial solute-binding protein 1 family. In terms of assembly, the complex is composed of two ATP-binding proteins (MsmX), two transmembrane proteins (MelC and MelD) and a solute-binding protein (MelE).

It localises to the cell membrane. Functionally, part of the ABC transporter complex MelEDC-MsmX involved in melibiose, raffinose and stachyose import. Binds melibiose, raffinose and stachyose. The chain is Melibiose/raffinose/stachyose-binding protein MelE from Bacillus subtilis (strain 168).